We begin with the raw amino-acid sequence, 97 residues long: Intermembrane phospholipid transport system binding protein MlaB (97 aa).

Residues 1–97 form the STAS domain; it reads MSESLSWMQT…YNLPADVLPR (97 aa).

In terms of assembly, the complex is composed of two ATP-binding proteins (MlaF), two transmembrane proteins (MlaE), two cytoplasmic solute-binding proteins (MlaB) and six periplasmic solute-binding proteins (MlaD).

It is found in the cytoplasm. In terms of biological role, part of the ABC transporter complex MlaFEDB, which is involved in a phospholipid transport pathway that maintains lipid asymmetry in the outer membrane by retrograde trafficking of phospholipids from the outer membrane to the inner membrane. MlaB plays critical roles in both the assembly and activity of the complex. May act by modulating MlaF structure and stability. This chain is Intermembrane phospholipid transport system binding protein MlaB, found in Escherichia coli (strain K12).